The primary structure comprises 298 residues: Anamorsin homolog (298 aa).

The segment at 1–143 (MTQLIITHQS…IKAEKPSWKP (143 aa)) is N-terminal SAM-like domain. Positions 143-162 (PEEGKVLVDDIDLEGSVPDI) are linker. [2Fe-2S] cluster contacts are provided by C175, C182, C185, and C187. Positions 175 to 187 (CKSKERACNNCNC) are fe-S binding site A. [4Fe-4S] cluster-binding residues include C218, C221, C229, and C232. 2 short sequence motifs (cx2C motif) span residues 218–221 (CGNC) and 229–232 (CSGC). The fe-S binding site B stretch occupies residues 218-232 (CGNCYLGDAFRCSGC).

Belongs to the anamorsin family. In terms of assembly, monomer. Requires [2Fe-2S] cluster as cofactor. [4Fe-4S] cluster serves as cofactor.

It is found in the cytoplasm. The protein localises to the mitochondrion intermembrane space. Functionally, component of the cytosolic iron-sulfur (Fe-S) protein assembly (CIA) machinery. Required for the maturation of extramitochondrial Fe-S proteins. Part of an electron transfer chain functioning in an early step of cytosolic Fe-S biogenesis, facilitating the de novo assembly of a [4Fe-4S] cluster on the cytosolic Fe-S scaffold complex. Electrons are transferred from NADPH via a FAD- and FMN-containing diflavin oxidoreductase. Together with the diflavin oxidoreductase, also required for the assembly of the diferric tyrosyl radical cofactor of ribonucleotide reductase (RNR), probably by providing electrons for reduction during radical cofactor maturation in the catalytic small subunit. In Cryptosporidium parvum (strain Iowa II), this protein is Anamorsin homolog.